Reading from the N-terminus, the 363-residue chain is UDP-3-O-acylglucosamine N-acyltransferase (363 aa).

The active-site Proton acceptor is His-266.

Belongs to the transferase hexapeptide repeat family. LpxD subfamily. Homotrimer.

It catalyses the reaction a UDP-3-O-[(3R)-3-hydroxyacyl]-alpha-D-glucosamine + a (3R)-hydroxyacyl-[ACP] = a UDP-2-N,3-O-bis[(3R)-3-hydroxyacyl]-alpha-D-glucosamine + holo-[ACP] + H(+). The protein operates within bacterial outer membrane biogenesis; LPS lipid A biosynthesis. Catalyzes the N-acylation of UDP-3-O-acylglucosamine using 3-hydroxyacyl-ACP as the acyl donor. Is involved in the biosynthesis of lipid A, a phosphorylated glycolipid that anchors the lipopolysaccharide to the outer membrane of the cell. The sequence is that of UDP-3-O-acylglucosamine N-acyltransferase from Bordetella bronchiseptica (strain ATCC BAA-588 / NCTC 13252 / RB50) (Alcaligenes bronchisepticus).